The sequence spans 743 residues: Threonine synthase-like 1 (743 aa).

Lys281 bears the N6-acetyllysine mark. Lys351 carries the N6-(pyridoxal phosphate)lysine modification.

This sequence belongs to the threonine synthase family. Requires pyridoxal 5'-phosphate as cofactor.

This chain is Threonine synthase-like 1 (THNSL1), found in Homo sapiens (Human).